A 287-amino-acid polypeptide reads, in one-letter code: uncharacterized protein (287 aa).

This is an uncharacterized protein from Acanthamoeba polyphaga mimivirus (APMV).